A 1054-amino-acid polypeptide reads, in one-letter code: Desmoglein-1 (1054 aa).

A signal peptide spans 1 to 23 (MNWHFLRTATVLLIFLVVVEINS). Positions 24–49 (EFRIQVRDYNTKNGTIKWHSIRRQKR) are excised as a propeptide. Residues N36, N110, and N180 are each glycosylated (N-linked (GlcNAc...) asparagine). Cadherin domains lie at 50-157 (EWIK…PPVF), 158-269 (SMST…IPYM), 270-389 (EPSS…RPGS), and 386-493 (RPGS…KDSE). Residues 50-566 (EWIKFAAACR…NLSDNVHFGP (517 aa)) are Extracellular-facing. The interval 487-554 (GWEKDSEKVT…QSNNNHQELG (68 aa)) is disordered. Over residues 496–507 (TSSQNSGSSTGD) the composition is skewed to low complexity. A compositionally biased stretch (gly residues) spans 508 to 517 (SSGGTGGGGR). Residues 523 to 534 (GDTTTNTGGKTS) show a composition bias toward low complexity. The segment covering 542 to 554 (TQTQSNNNHQELG) has biased composition (polar residues). The N-linked (GlcNAc...) asparagine glycan is linked to N557. A helical membrane pass occupies residues 567 to 587 (AGIGLLIMGFLVLGLVPFLLM). Residues 588-1054 (CCDCGGAPGA…TKYSTVQYTK (467 aa)) are Cytoplasmic-facing. Desmoglein repeat repeat units follow at residues 830-856 (TYPS…TVTE), 857-886 (SYTT…ERVV), 887-916 (GPIS…ERVI), 917-944 (APSS…ERVI), and 945-973 (RPAS…ERVV). Residues 1018 to 1040 (GHVRSSSDHHFSQTLGSASPSTA) form a disordered region. Residues 1029 to 1040 (SQTLGSASPSTA) are compositionally biased toward polar residues.

As to quaternary structure, binds to JUP/plakoglobin. Interacts with PKP2. Interacts with DSC3; there is evidence to suggest that the interaction promotes cell-cell adhesion of keratinocytes.

The protein resides in the cell membrane. The protein localises to the cell junction. It is found in the desmosome. It localises to the cytoplasm. Its subcellular location is the nucleus. Its function is as follows. Component of intercellular desmosome junctions. Involved in the interaction of plaque proteins and intermediate filaments mediating cell-cell adhesion. The protein is Desmoglein-1 (DSG1) of Canis lupus familiaris (Dog).